We begin with the raw amino-acid sequence, 349 residues long: Fructose-1,6-bisphosphatase class 1 (349 aa).

4 residues coordinate Mg(2+): glutamate 92, aspartate 113, leucine 115, and aspartate 116. Residues 116 to 119, asparagine 209, tyrosine 242, and lysine 272 contribute to the substrate site; that span reads DGSS. A Mg(2+)-binding site is contributed by glutamate 278.

It belongs to the FBPase class 1 family. Homotetramer. Requires Mg(2+) as cofactor.

The protein resides in the cytoplasm. It carries out the reaction beta-D-fructose 1,6-bisphosphate + H2O = beta-D-fructose 6-phosphate + phosphate. The protein operates within carbohydrate biosynthesis; Calvin cycle. This Chloroherpeton thalassium (strain ATCC 35110 / GB-78) protein is Fructose-1,6-bisphosphatase class 1.